Consider the following 545-residue polypeptide: Glucose-6-phosphate isomerase (545 aa).

Catalysis depends on glutamate 351, which acts as the Proton donor. Residues histidine 382 and lysine 510 contribute to the active site.

The protein belongs to the GPI family.

It localises to the cytoplasm. The enzyme catalyses alpha-D-glucose 6-phosphate = beta-D-fructose 6-phosphate. It functions in the pathway carbohydrate biosynthesis; gluconeogenesis. The protein operates within carbohydrate degradation; glycolysis; D-glyceraldehyde 3-phosphate and glycerone phosphate from D-glucose: step 2/4. Functionally, catalyzes the reversible isomerization of glucose-6-phosphate to fructose-6-phosphate. This is Glucose-6-phosphate isomerase from Shewanella sp. (strain MR-4).